We begin with the raw amino-acid sequence, 144 residues long: Austinoid biosynthesis clusters protein S (144 aa).

The protein belongs to the trt14 isomerase family. Homodimer.

It participates in secondary metabolite biosynthesis; terpenoid biosynthesis. In terms of biological role, part of the gene cluster B that mediates the biosynthesis of the fungal meroterpenoid acetoxydehydroaustin. The first step of the pathway is the synthesis of 3,5-dimethylorsellinic acid by the polyketide synthase ausA. 3,5-dimethylorsellinic acid is then prenylated by the polyprenyl transferase ausN. Further epoxidation by the FAD-dependent monooxygenase ausM and cyclization by the probable terpene cyclase ausL lead to the formation of protoaustinoid A. Protoaustinoid A is then oxidized to spiro-lactone preaustinoid A3 by the combined action of the FAD-binding monooxygenases ausB and ausC, and the dioxygenase ausE. Acid-catalyzed keto-rearrangement and ring contraction of the tetraketide portion of preaustinoid A3 by ausJ lead to the formation of preaustinoid A4. The aldo-keto reductase ausK, with the help of ausH, is involved in the next step by transforming preaustinoid A4 into isoaustinone which is in turn hydroxylated by the P450 monooxygenase ausI to form austinolide. The cytochrome P450 monooxygenase ausG then modifies austinolide to austinol. Austinol is further acetylated to austin by the O-acetyltransferase ausP, which spontaneously changes to dehydroaustin. The cytochrome P450 monooxygenase then converts dehydroaustin is into 7-dehydrodehydroaustin. The hydroxylation catalyzed by ausR permits the second O-acetyltransferase ausQ to add an additional acetyl group to the molecule, leading to the formation of acetoxydehydroaustin. Due to genetic rearrangements of the clusters and the subsequent loss of some enzymes, the end product of the Penicillium brasilianum austinoid biosynthesis clusters is acetoxydehydroaustin. AusS is necessary for austinoids production and may play a possible function as a regulator. The sequence is that of Austinoid biosynthesis clusters protein S from Penicillium brasilianum.